A 332-amino-acid chain; its full sequence is Protoheme IX farnesyltransferase (332 aa).

7 helical membrane-spanning segments follow: residues 63-83 (LICT…LNCL), 109-129 (TVFL…ISGV), 132-152 (LAAG…TIIL), 160-180 (IVFG…AATG), 188-208 (WLFG…AILL), 245-265 (ILGV…LLPF), and 286-306 (AKGL…LLLI).

It belongs to the UbiA prenyltransferase family. Protoheme IX farnesyltransferase subfamily.

The protein localises to the cell inner membrane. It carries out the reaction heme b + (2E,6E)-farnesyl diphosphate + H2O = Fe(II)-heme o + diphosphate. The protein operates within porphyrin-containing compound metabolism; heme O biosynthesis; heme O from protoheme: step 1/1. Converts heme B (protoheme IX) to heme O by substitution of the vinyl group on carbon 2 of heme B porphyrin ring with a hydroxyethyl farnesyl side group. The sequence is that of Protoheme IX farnesyltransferase from Prochlorococcus marinus (strain MIT 9515).